A 634-amino-acid chain; its full sequence is Pentatricopeptide repeat-containing protein At5g14080 (634 aa).

PPR repeat units follow at residues 81–115 (DSISYHSIFKSLSLSRQFSAMDALFKQVKSNKILL), 116–150 (DSSVYRSLIDTLVLGRKAQSAFWVLEEAFSTGQEI), 151–185 (HPDVCNRLLAGLTSDGCYDYAQKLFVKMRHKGVSL), 186–220 (NTLGFGVYIGWFCRSSETNQLLRLVDEVKKANLNI), 222–256 (GSIIALLILHSLCKCSREMDAFYILEELRNIDCKP), 257–291 (DFMAYRVIAEAFVVTGNLYERQVVLKKKRKLGVAP), 292–326 (RSSDYRAFILDLISAKRLTEAKEVAEVIVSGKFPM), 327–360 (DNDILDALIGSVSAVDPDSAVEFLVYMVSTGKLP), 361–395 (AIRTLSKLSKNLCRHDKSDHLIKAYELLSSKGYFS), 396–430 (ELQSYSLMISFLCKAGRVRESYTALQEMKKEGLAP), 431–465 (DVSLYNALIEACCKAEMIRPAKKLWDEMFVEGCKM), 466–500 (NLTTYNVLIRKLSEEGEAEESLRLFDKMLERGIEP), and 501–535 (DETIYMSLIEGLCKETKIEAAMEVFRKCMERDHKT).

Belongs to the PPR family. P subfamily.

This Arabidopsis thaliana (Mouse-ear cress) protein is Pentatricopeptide repeat-containing protein At5g14080.